Consider the following 687-residue polypeptide: DNA ligase (687 aa).

NAD(+) contacts are provided by residues 33-37 (DAEFD), 83-84 (SL), and Glu-113. The active-site N6-AMP-lysine intermediate is the Lys-115. NAD(+) is bound by residues Arg-136, Glu-176, Lys-292, and Lys-316. Zn(2+)-binding residues include Cys-410, Cys-413, Cys-429, and Cys-435. Positions 599-687 (SVPRTLAGVT…GPPAEVGEPT (89 aa)) constitute a BRCT domain.

It belongs to the NAD-dependent DNA ligase family. LigA subfamily. The cofactor is Mg(2+). It depends on Mn(2+) as a cofactor.

It carries out the reaction NAD(+) + (deoxyribonucleotide)n-3'-hydroxyl + 5'-phospho-(deoxyribonucleotide)m = (deoxyribonucleotide)n+m + AMP + beta-nicotinamide D-nucleotide.. In terms of biological role, DNA ligase that catalyzes the formation of phosphodiester linkages between 5'-phosphoryl and 3'-hydroxyl groups in double-stranded DNA using NAD as a coenzyme and as the energy source for the reaction. It is essential for DNA replication and repair of damaged DNA. The protein is DNA ligase of Mycobacterium marinum (strain ATCC BAA-535 / M).